We begin with the raw amino-acid sequence, 88 residues long: Small ribosomal subunit protein bS20 (88 aa).

The interval methionine 1–asparagine 21 is disordered.

The protein belongs to the bacterial ribosomal protein bS20 family.

Functionally, binds directly to 16S ribosomal RNA. The polypeptide is Small ribosomal subunit protein bS20 (Agrobacterium fabrum (strain C58 / ATCC 33970) (Agrobacterium tumefaciens (strain C58))).